The sequence spans 359 residues: Methylthioribose-1-phosphate isomerase (359 aa).

Residues 50-52, R93, and Q200 each bind substrate; that span reads RGA. D241 functions as the Proton donor in the catalytic mechanism. A substrate-binding site is contributed by 251–252; that stretch reads NK.

Belongs to the eIF-2B alpha/beta/delta subunits family. MtnA subfamily.

It carries out the reaction 5-(methylsulfanyl)-alpha-D-ribose 1-phosphate = 5-(methylsulfanyl)-D-ribulose 1-phosphate. The protein operates within amino-acid biosynthesis; L-methionine biosynthesis via salvage pathway; L-methionine from S-methyl-5-thio-alpha-D-ribose 1-phosphate: step 1/6. Its function is as follows. Catalyzes the interconversion of methylthioribose-1-phosphate (MTR-1-P) into methylthioribulose-1-phosphate (MTRu-1-P). The polypeptide is Methylthioribose-1-phosphate isomerase (Symbiobacterium thermophilum (strain DSM 24528 / JCM 14929 / IAM 14863 / T)).